A 258-amino-acid chain; its full sequence is Tryptophan synthase alpha chain (258 aa).

Active-site proton acceptor residues include E52 and D63.

This sequence belongs to the TrpA family. As to quaternary structure, tetramer of two alpha and two beta chains.

It catalyses the reaction (1S,2R)-1-C-(indol-3-yl)glycerol 3-phosphate + L-serine = D-glyceraldehyde 3-phosphate + L-tryptophan + H2O. Its pathway is amino-acid biosynthesis; L-tryptophan biosynthesis; L-tryptophan from chorismate: step 5/5. Its function is as follows. The alpha subunit is responsible for the aldol cleavage of indoleglycerol phosphate to indole and glyceraldehyde 3-phosphate. In Streptococcus pneumoniae (strain Taiwan19F-14), this protein is Tryptophan synthase alpha chain.